A 172-amino-acid chain; its full sequence is dCTP pyrophosphatase (172 aa).

The enzyme catalyses dCTP + H2O = dCMP + diphosphate + H(+). The sequence is that of dCTP pyrophosphatase (56) from Enterobacteria phage LZ5 (Bacteriophage LZ5).